Reading from the N-terminus, the 784-residue chain is Kinesin-like protein 6 (784 aa).

The 384-residue stretch at 6–389 (SISVAVRVRP…LKYGNRAKNI (384 aa)) folds into the Kinesin motor domain. ATP is bound at residue 134 to 141 (GATGCGKT). 2 coiled-coil regions span residues 405-440 (SEYV…EVRK) and 463-483 (RDLQ…EDEI). The segment at 677–715 (SEVPTTSSVPPVEIKNKDSKPKVEKSLDKHNMNNDRSFL) is disordered. The span at 690 to 709 (IKNKDSKPKVEKSLDKHNMN) shows a compositional bias: basic and acidic residues.

It belongs to the TRAFAC class myosin-kinesin ATPase superfamily. Kinesin family. Kinesin II subfamily. Heterodimer with klp5.

Its subcellular location is the cytoplasm. It localises to the cytoskeleton. It is found in the chromosome. The protein localises to the centromere. The protein resides in the kinetochore. Its subcellular location is the spindle. Its function is as follows. Has a role in establishing metaphase during mitosis. Required for chromosome segregation where it generates tension during kinetochore capturing. This Schizosaccharomyces pombe (strain 972 / ATCC 24843) (Fission yeast) protein is Kinesin-like protein 6 (klp6).